The primary structure comprises 361 residues: MNAKGESMLSRRLEALTPYVPGEQPRDRKYLKLNTNENPWPPSPRIEALLREYDPDQLRLYPDPWSLSLRQKIARKYSVDVDNIFVGNGSDEILSFVWYAFFDGLYGKLVFPQFTYSFYPVYCDFYEIPYRRIPLRPDFTLDLEAMIENGGEPSCGMAFPNPNAPTGIALTLKQIEDLLNRYPTDRVVVIDEAYIDFGGESAVGLIDRYANLLVARTFSKSFSLAGLRLGYALGSPELIRALFVTKDSFNSYTVGRLTQTIGEIAIEDEAWFAEKIARIIEARDFFSEELKGQGWQVLPSKANFVFVRKPGLTGQTIYETLKERGILVRYFNVEGIRDFVRVTIGKREDMARLLEELKRLF.

At K220 the chain carries N6-(pyridoxal phosphate)lysine.

It belongs to the class-II pyridoxal-phosphate-dependent aminotransferase family. Histidinol-phosphate aminotransferase subfamily. As to quaternary structure, homodimer. Requires pyridoxal 5'-phosphate as cofactor.

The catalysed reaction is L-histidinol phosphate + 2-oxoglutarate = 3-(imidazol-4-yl)-2-oxopropyl phosphate + L-glutamate. The protein operates within amino-acid biosynthesis; L-histidine biosynthesis; L-histidine from 5-phospho-alpha-D-ribose 1-diphosphate: step 7/9. In Syntrophus aciditrophicus (strain SB), this protein is Histidinol-phosphate aminotransferase.